A 613-amino-acid chain; its full sequence is Metacaspase-1 (613 aa).

Residues H404 and C460 contribute to the active site.

The protein belongs to the peptidase C14B family. In terms of assembly, monomer.

Its activity is regulated as follows. Activated by Ca(2+). In terms of biological role, cysteine protease that cleaves specifically after arginine or lysine residues. May play a role in apoptosis. This Plasmodium falciparum (isolate 3D7) protein is Metacaspase-1.